Consider the following 366-residue polypeptide: GDSL esterase/lipase LTL1 (366 aa).

The signal sequence occupies residues 1-27; sequence MNINCSPLGFLISLFFIVTFLAPQVKS. Ser36 (nucleophile) is an active-site residue. Asn117 is a glycosylation site (N-linked (GlcNAc...) asparagine). Catalysis depends on residues Asp326 and His329. N-linked (GlcNAc...) asparagine glycosylation is present at Asn354.

It belongs to the 'GDSL' lipolytic enzyme family. In terms of assembly, binds to VLG at the endomembrane system. In terms of tissue distribution, mostly expressed in flowers, reproductive stems and rosette leaves, and, to a lower extent, in roots.

The protein resides in the secreted. Functionally, involved in the mechanisms of salt tolerance. Mediates resistance to LiCl and NaCl. The polypeptide is GDSL esterase/lipase LTL1 (Arabidopsis thaliana (Mouse-ear cress)).